We begin with the raw amino-acid sequence, 260 residues long: Hydroxyethylthiazole kinase (260 aa).

Met38 provides a ligand contact to substrate. 2 residues coordinate ATP: Lys114 and Ser161. A substrate-binding site is contributed by Gly188.

The protein belongs to the Thz kinase family. Mg(2+) serves as cofactor.

The enzyme catalyses 5-(2-hydroxyethyl)-4-methylthiazole + ATP = 4-methyl-5-(2-phosphooxyethyl)-thiazole + ADP + H(+). Its pathway is cofactor biosynthesis; thiamine diphosphate biosynthesis; 4-methyl-5-(2-phosphoethyl)-thiazole from 5-(2-hydroxyethyl)-4-methylthiazole: step 1/1. In terms of biological role, catalyzes the phosphorylation of the hydroxyl group of 4-methyl-5-beta-hydroxyethylthiazole (THZ). The protein is Hydroxyethylthiazole kinase of Campylobacter lari (strain RM2100 / D67 / ATCC BAA-1060).